Here is a 204-residue protein sequence, read N- to C-terminus: Peptide deformylase (204 aa).

Residues Cys-131 and His-174 each coordinate Fe cation. Glu-175 is an active-site residue. His-178 lines the Fe cation pocket.

This sequence belongs to the polypeptide deformylase family. Fe(2+) serves as cofactor.

The catalysed reaction is N-terminal N-formyl-L-methionyl-[peptide] + H2O = N-terminal L-methionyl-[peptide] + formate. Functionally, removes the formyl group from the N-terminal Met of newly synthesized proteins. Requires at least a dipeptide for an efficient rate of reaction. N-terminal L-methionine is a prerequisite for activity but the enzyme has broad specificity at other positions. This chain is Peptide deformylase, found in Streptococcus pyogenes serotype M1.